A 90-amino-acid polypeptide reads, in one-letter code: MTRMVQCAKLGKEAEGLDFPPLPGELGKRIYESISKEAWQAWLKQQTMLINENRLNMADPRARQYLMKQTEKFFFGEGADTAQGYVPPSA.

Belongs to the Fe(2+)-trafficking protein family.

Could be a mediator in iron transactions between iron acquisition and iron-requiring processes, such as synthesis and/or repair of Fe-S clusters in biosynthetic enzymes. The chain is Probable Fe(2+)-trafficking protein from Paraburkholderia xenovorans (strain LB400).